The following is a 415-amino-acid chain: Serine hydroxymethyltransferase (415 aa).

Residues L120 and 124 to 126 each bind (6S)-5,6,7,8-tetrahydrofolate; that span reads GHL. K229 carries the post-translational modification N6-(pyridoxal phosphate)lysine.

Belongs to the SHMT family. Homodimer. It depends on pyridoxal 5'-phosphate as a cofactor.

Its subcellular location is the cytoplasm. The enzyme catalyses (6R)-5,10-methylene-5,6,7,8-tetrahydrofolate + glycine + H2O = (6S)-5,6,7,8-tetrahydrofolate + L-serine. It participates in one-carbon metabolism; tetrahydrofolate interconversion. It functions in the pathway amino-acid biosynthesis; glycine biosynthesis; glycine from L-serine: step 1/1. In terms of biological role, catalyzes the reversible interconversion of serine and glycine with tetrahydrofolate (THF) serving as the one-carbon carrier. This reaction serves as the major source of one-carbon groups required for the biosynthesis of purines, thymidylate, methionine, and other important biomolecules. Also exhibits THF-independent aldolase activity toward beta-hydroxyamino acids, producing glycine and aldehydes, via a retro-aldol mechanism. The polypeptide is Serine hydroxymethyltransferase (Pelotomaculum thermopropionicum (strain DSM 13744 / JCM 10971 / SI)).